The sequence spans 233 residues: 7-cyano-7-deazaguanine synthase (233 aa).

7-17 (CSGGLDSVSLA) provides a ligand contact to ATP. Zn(2+) is bound by residues C185, C193, C196, and C199.

The protein belongs to the QueC family. The cofactor is Zn(2+).

The enzyme catalyses 7-carboxy-7-deazaguanine + NH4(+) + ATP = 7-cyano-7-deazaguanine + ADP + phosphate + H2O + H(+). The protein operates within purine metabolism; 7-cyano-7-deazaguanine biosynthesis. In terms of biological role, catalyzes the ATP-dependent conversion of 7-carboxy-7-deazaguanine (CDG) to 7-cyano-7-deazaguanine (preQ(0)). In Ruegeria sp. (strain TM1040) (Silicibacter sp.), this protein is 7-cyano-7-deazaguanine synthase.